A 299-amino-acid polypeptide reads, in one-letter code: Coenzyme PQQ synthesis protein B (299 aa).

It belongs to the PqqB family.

The protein operates within cofactor biosynthesis; pyrroloquinoline quinone biosynthesis. Functionally, may be involved in the transport of PQQ or its precursor to the periplasm. This Methylobacterium sp. (strain 4-46) protein is Coenzyme PQQ synthesis protein B.